Reading from the N-terminus, the 59-residue chain is Bdellastasin (59 aa).

Intrachain disulfides connect Cys-10–Cys-21, Cys-15–Cys-26, Cys-28–Cys-48, Cys-33–Cys-52, and Cys-37–Cys-54. Positions Cys-28–Cys-54 constitute an Antistasin-like domain.

It is found in the secreted. In terms of biological role, strong inhibitor of mammalian trypsin, plasmin and acrosin. This Hirudo medicinalis (Medicinal leech) protein is Bdellastasin.